Reading from the N-terminus, the 458-residue chain is uncharacterized protein (458 aa).

Positions 1–10 are enriched in basic and acidic residues; that stretch reads MQAEPKKSQA. A disordered region spans residues 1–20; it reads MQAEPKKSQAEQRAVAEPVS. A TRAM domain is found at 23-84; sequence VSLVGEEYEV…ARFLRADAVE (62 aa). 4 residues coordinate [4Fe-4S] cluster: C97, C105, C108, and C193. The S-adenosyl-L-methionine site is built by Q287, Y316, E340, and D384. Residue C411 is the Nucleophile of the active site.

The protein belongs to the class I-like SAM-binding methyltransferase superfamily. RNA M5U methyltransferase family.

This is an uncharacterized protein from Streptomyces coelicolor (strain ATCC BAA-471 / A3(2) / M145).